The sequence spans 270 residues: Non-homologous end joining protein Ku (270 aa).

In terms of domain architecture, Ku spans 10-194 (SLGLLNIGIK…NYPIQKQELT (185 aa)).

The protein belongs to the prokaryotic Ku family. Homodimer. Interacts with LigD.

Its function is as follows. With LigD forms a non-homologous end joining (NHEJ) DNA repair enzyme, which repairs dsDNA breaks with reduced fidelity. Binds linear dsDNA with 5'- and 3'- overhangs but not closed circular dsDNA nor ssDNA. Recruits and stimulates the ligase activity of LigD. The polypeptide is Non-homologous end joining protein Ku (Bacillus thuringiensis subsp. konkukian (strain 97-27)).